The chain runs to 461 residues: tRNA modification GTPase MnmE (461 aa).

3 residues coordinate (6S)-5-formyl-5,6,7,8-tetrahydrofolate: Arg-22, Glu-87, and Arg-126. The TrmE-type G domain maps to 222 to 382 (GLKTVIVGKP…LEETIFNMVV (161 aa)). Asn-232 lines the K(+) pocket. GTP-binding positions include 232 to 237 (NVGKSS), 251 to 257 (TDIPGTT), and 276 to 279 (DTAG). Ser-236 serves as a coordination point for Mg(2+). Residues Thr-251, Ile-253, and Thr-256 each coordinate K(+). Residue Thr-257 participates in Mg(2+) binding. Position 461 (Lys-461) interacts with (6S)-5-formyl-5,6,7,8-tetrahydrofolate.

It belongs to the TRAFAC class TrmE-Era-EngA-EngB-Septin-like GTPase superfamily. TrmE GTPase family. Homodimer. Heterotetramer of two MnmE and two MnmG subunits. It depends on K(+) as a cofactor.

The protein resides in the cytoplasm. In terms of biological role, exhibits a very high intrinsic GTPase hydrolysis rate. Involved in the addition of a carboxymethylaminomethyl (cmnm) group at the wobble position (U34) of certain tRNAs, forming tRNA-cmnm(5)s(2)U34. This Desulforamulus reducens (strain ATCC BAA-1160 / DSM 100696 / MI-1) (Desulfotomaculum reducens) protein is tRNA modification GTPase MnmE.